Consider the following 103-residue polypeptide: Integration host factor subunit beta (103 aa).

Belongs to the bacterial histone-like protein family. As to quaternary structure, heterodimer of an alpha and a beta chain.

This protein is one of the two subunits of integration host factor, a specific DNA-binding protein that functions in genetic recombination as well as in transcriptional and translational control. The polypeptide is Integration host factor subunit beta (Rhizobium meliloti (strain 1021) (Ensifer meliloti)).